The primary structure comprises 208 residues: Ribosomal RNA small subunit methyltransferase G (208 aa).

Residues glycine 78, phenylalanine 83, 101-103 (ERS), 129-130 (IE), and arginine 142 contribute to the S-adenosyl-L-methionine site.

The protein belongs to the methyltransferase superfamily. RNA methyltransferase RsmG family.

The protein localises to the cytoplasm. Specifically methylates the N7 position of a guanine in 16S rRNA. This is Ribosomal RNA small subunit methyltransferase G from Borreliella burgdorferi (strain ATCC 35210 / DSM 4680 / CIP 102532 / B31) (Borrelia burgdorferi).